Consider the following 77-residue polypeptide: Vacuolar ATPase assembly integral membrane protein VMA21 (77 aa).

Residues 1–8 (MAVDVPTS) lie on the Cytoplasmic side of the membrane. Residues 9-29 (VIVKLMFFTLAMVSFPVLTFF) form a helical membrane-spanning segment. The Lumenal segment spans residues 30–41 (VSQQYTSNTLVN). Residues 42 to 62 (GGLAALAANVVLFAYVIMAFS) form a helical membrane-spanning segment. Topologically, residues 63-77 (EDVPQSDGKESKKQQ) are cytoplasmic. The short motif at 74–77 (KKQQ) is the Prevents secretion from ER element.

Belongs to the VMA21 family.

The protein resides in the endoplasmic reticulum membrane. The protein localises to the endoplasmic reticulum-Golgi intermediate compartment membrane. It is found in the cytoplasmic vesicle. It localises to the COPII-coated vesicle membrane. Its function is as follows. Required for the assembly of the V0 complex of the vacuolar ATPase (V-ATPase) in the endoplasmic reticulum. The sequence is that of Vacuolar ATPase assembly integral membrane protein VMA21 from Eremothecium gossypii (strain ATCC 10895 / CBS 109.51 / FGSC 9923 / NRRL Y-1056) (Yeast).